Here is an 80-residue protein sequence, read N- to C-terminus: Exodeoxyribonuclease 7 small subunit (80 aa).

It belongs to the XseB family. In terms of assembly, heterooligomer composed of large and small subunits.

It localises to the cytoplasm. The catalysed reaction is Exonucleolytic cleavage in either 5'- to 3'- or 3'- to 5'-direction to yield nucleoside 5'-phosphates.. Its function is as follows. Bidirectionally degrades single-stranded DNA into large acid-insoluble oligonucleotides, which are then degraded further into small acid-soluble oligonucleotides. This chain is Exodeoxyribonuclease 7 small subunit, found in Pseudoalteromonas translucida (strain TAC 125).